We begin with the raw amino-acid sequence, 140 residues long: 3-hydroxyacyl-[acyl-carrier-protein] dehydratase FabZ (140 aa).

H47 is an active-site residue.

This sequence belongs to the thioester dehydratase family. FabZ subfamily.

It localises to the cytoplasm. It catalyses the reaction a (3R)-hydroxyacyl-[ACP] = a (2E)-enoyl-[ACP] + H2O. Its function is as follows. Involved in unsaturated fatty acids biosynthesis. Catalyzes the dehydration of short chain beta-hydroxyacyl-ACPs and long chain saturated and unsaturated beta-hydroxyacyl-ACPs. The protein is 3-hydroxyacyl-[acyl-carrier-protein] dehydratase FabZ of Streptococcus equi subsp. equi (strain 4047).